We begin with the raw amino-acid sequence, 460 residues long: Argininosuccinate lyase (460 aa).

This sequence belongs to the lyase 1 family. Argininosuccinate lyase subfamily.

It localises to the cytoplasm. It carries out the reaction 2-(N(omega)-L-arginino)succinate = fumarate + L-arginine. Its pathway is amino-acid biosynthesis; L-arginine biosynthesis; L-arginine from L-ornithine and carbamoyl phosphate: step 3/3. The polypeptide is Argininosuccinate lyase (Streptococcus mutans serotype c (strain ATCC 700610 / UA159)).